The sequence spans 181 residues: uncharacterized protein (181 aa).

This sequence belongs to the methyltransferase superfamily.

This is an uncharacterized protein from Bacillus subtilis (strain 168).